A 281-amino-acid chain; its full sequence is 2,3,4,5-tetrahydropyridine-2,6-dicarboxylate N-succinyltransferase (281 aa).

2 residues coordinate substrate: arginine 108 and aspartate 145.

It belongs to the transferase hexapeptide repeat family. In terms of assembly, homotrimer.

It is found in the cytoplasm. The catalysed reaction is (S)-2,3,4,5-tetrahydrodipicolinate + succinyl-CoA + H2O = (S)-2-succinylamino-6-oxoheptanedioate + CoA. Its pathway is amino-acid biosynthesis; L-lysine biosynthesis via DAP pathway; LL-2,6-diaminopimelate from (S)-tetrahydrodipicolinate (succinylase route): step 1/3. In Rhodopseudomonas palustris (strain BisB5), this protein is 2,3,4,5-tetrahydropyridine-2,6-dicarboxylate N-succinyltransferase.